The sequence spans 331 residues: Glyceraldehyde-3-phosphate dehydrogenase 2 (331 aa).

NAD(+) is bound by residues 11 to 12 (RI), Asp33, and Arg78. D-glyceraldehyde 3-phosphate is bound by residues 148–150 (SCT), Thr179, 208–209 (TG), and Arg231. Cys149 functions as the Nucleophile in the catalytic mechanism. Position 313 (Asn313) interacts with NAD(+).

The protein belongs to the glyceraldehyde-3-phosphate dehydrogenase family. In terms of assembly, homotetramer.

The protein resides in the cytoplasm. It carries out the reaction D-glyceraldehyde 3-phosphate + phosphate + NAD(+) = (2R)-3-phospho-glyceroyl phosphate + NADH + H(+). It participates in carbohydrate degradation; glycolysis; pyruvate from D-glyceraldehyde 3-phosphate: step 1/5. The protein is Glyceraldehyde-3-phosphate dehydrogenase 2 (GAP2) of Kluyveromyces marxianus (Yeast).